Consider the following 191-residue polypeptide: Protein GrpE (191 aa).

Composition is skewed to basic and acidic residues over residues 1 to 19 (MKDEHNQEHDHLSPKEPES) and 29 to 45 (QQGEEKQEASEKEGEIK). Positions 1-45 (MKDEHNQEHDHLSPKEPESYQKAYACKEQQGEEKQEASEKEGEIK) are disordered.

Belongs to the GrpE family. In terms of assembly, homodimer.

The protein resides in the cytoplasm. Its function is as follows. Participates actively in the response to hyperosmotic and heat shock by preventing the aggregation of stress-denatured proteins, in association with DnaK and GrpE. It is the nucleotide exchange factor for DnaK and may function as a thermosensor. Unfolded proteins bind initially to DnaJ; upon interaction with the DnaJ-bound protein, DnaK hydrolyzes its bound ATP, resulting in the formation of a stable complex. GrpE releases ADP from DnaK; ATP binding to DnaK triggers the release of the substrate protein, thus completing the reaction cycle. Several rounds of ATP-dependent interactions between DnaJ, DnaK and GrpE are required for fully efficient folding. The polypeptide is Protein GrpE (Helicobacter pylori (strain J99 / ATCC 700824) (Campylobacter pylori J99)).